The sequence spans 768 residues: P-selectin (768 aa).

The first 41 residues, 1–41, serve as a signal peptide directing secretion; sequence MAGCPKGSWKPRLRSVVLGAAQLIWLSALISELVNRKKVAT. At 42 to 709 the chain is on the extracellular side; the sequence is WTYNYSTKAY…QAGTLTIQEA (668 aa). N-linked (GlcNAc...) asparagine glycans are attached at residues Asn45, Asn54, and Asn107. Positions 58–158 constitute a C-type lectin domain; the sequence is AFCKRHFTDL…PCFKRKRALC (101 aa). Cystine bridges form between Cys60/Cys158, Cys131/Cys150, Cys168/Cys183, Cys185/Cys194, Cys200/Cys244, Cys230/Cys257, Cys262/Cys306, Cys292/Cys319, Cys324/Cys368, Cys354/Cys381, Cys386/Cys430, Cys416/Cys443, Cys448/Cys492, Cys478/Cys505, Cys510/Cys554, Cys540/Cys567, Cys580/Cys624, Cys610/Cys637, Cys642/Cys686, and Cys672/Cys699. Ca(2+) contacts are provided by Glu121, Asn123, and Asn124. Asn123 is an a carbohydrate binding site. A carbohydrate contacts are provided by Glu133 and Asn146. The Ca(2+) site is built by Asn146 and Asp147. Residues 159-195 enclose the EGF-like domain; that stretch reads YTASCQDMSCNSQGERIETIGSYTCSCYPGFYGPECE. 8 Sushi domains span residues 198–259, 260–321, 322–383, 384–445, 446–507, 508–569, 578–639, and 640–701; these read QECG…QCKA, VQCQ…TCEA, IACE…VCEA, LQCQ…ECQA, VSCT…MCEA, IKCP…TCKG, VRCP…VCRA, and VKCS…TCQA. Asn212 carries an N-linked (GlcNAc...) asparagine glycan. Residue Asn347 is glycosylated (N-linked (GlcNAc...) asparagine). An N-linked (GlcNAc...) asparagine glycan is attached at Asn456. Asn603 is a glycosylation site (N-linked (GlcNAc...) asparagine). N-linked (GlcNAc...) asparagine glycosylation is found at Asn654, Asn661, and Asn679. A helical transmembrane segment spans residues 710 to 733; sequence LTYLGGALASTSGLAVGGTLLALL. Residues 734–768 lie on the Cytoplasmic side of the membrane; the sequence is RKRLRKKDDGKCPLNPHSHLGTYGVFTNAAYDPTP. The S-palmitoyl cysteine; alternate moiety is linked to residue Cys745. Residue Cys745 is the site of S-stearoyl cysteine; alternate attachment. Residues 756–759 carry the Endocytosis signal motif; sequence YGVF. An interaction with SNX17 region spans residues 759 to 768; the sequence is FTNAAYDPTP.

Belongs to the selectin/LECAM family. In terms of assembly, interacts with SNX17. Interacts with SELPLG/PSGL1 and PODXL2 and mediates neutrophil adhesion and leukocyte rolling. This interaction requires the sialyl-Lewis X epitope of SELPLG and PODXL2, and specific tyrosine sulfation on SELPLG. Interacts (via C-type lectin domain) with alpha-IIb/beta3 integrin ITGA2B:ITGB3 and alpha-V/beta-3 integrin ITGAV:ITGB3. Interacts with alpha5/beta1 integrin ITGA5:ITGB1 and alpha4/beta1 integrin ITGA4:ITGB. Not detected in the absence of exposure to lipopolysaccharide (LPS). Detected only after exposure to lipopolysaccharide (LPS) in the tissues examined: spleen, lung, brain, liver, heart, kidney, thymus and small intestine.

Its subcellular location is the cell membrane. Its function is as follows. Ca(2+)-dependent receptor for myeloid cells that binds to carbohydrates on neutrophils and monocytes. Mediates the interaction of activated endothelial cells or platelets with leukocytes. The ligand recognized is sialyl-Lewis X. Mediates rapid rolling of leukocyte rolling over vascular surfaces during the initial steps in inflammation through interaction with SELPLG. Mediates cell-cell interactions and cell adhesion via the interaction with integrin alpha-IIb/beta3 (ITGA2B:ITGB3) and integrin alpha-V/beta-3 (ITGAV:ITGB3). The protein is P-selectin (Selp) of Rattus norvegicus (Rat).